Reading from the N-terminus, the 266-residue chain is PTS system mannose-specific EIIC component (266 aa).

Position 1 is an N-formylmethionine (Met1). At 1–4 (MEIT) the chain is on the periplasmic side. Positions 1-237 (MEITTLQIVL…GVIGTVMAVL (237 aa)) constitute a PTS EIIC type-4 domain. An intramembrane segment occupies 5-43 (TLQIVLVFIVACIAGMGSILDEFQFHRPLIACTLVGIVL). Over 44 to 46 (GDM) the chain is Periplasmic. Residues 47–86 (KTGIIIGGTLEMIALGWMNIGAAVAPDAALASIISTILVI) lie within the membrane without spanning it. Over 87 to 90 (AGHQ) the chain is Periplasmic. A membrane pass occupies residues 91-124 (SIGAGIALAIPLAAAGQVLTIIVRTITVAFQHAA). The Cytoplasmic segment spans residues 125–132 (DKAADNGN). Over 133–160 (LTAISWIHVSSLFLQAMRVAIPAVIVAL) the chain traverses the membrane. Over 161–176 (SVGTSEVQNMLNAIPE) the chain is Periplasmic. Over 177 to 200 (VVTNGLNIAGGMIVVVGYAMVINM) the chain traverses the membrane. The Cytoplasmic portion of the chain corresponds to 201-207 (MRAGYLM). A transmembrane helix spans residues 208 to 218 (PFFYLGFVTAA). At 219–224 (FTNFNL) the chain is on the periplasmic side. A transmembrane span lies at residues 225 to 242 (VALGVIGTVMAVLYIQLS). Residues 243-266 (PKYNRVAGAPAQAAGNNDLDNELD) lie on the Cytoplasmic side of the membrane.

In terms of assembly, homotrimer of protomers that are composed of two subunits, IIC and IID.

The protein resides in the cell inner membrane. Functionally, the phosphoenolpyruvate-dependent sugar phosphotransferase system (sugar PTS), a major carbohydrate active transport system, catalyzes the phosphorylation of incoming sugar substrates concomitantly with their translocation across the cell membrane. The enzyme II ManXYZ PTS system is involved in mannose transport. The sequence is that of PTS system mannose-specific EIIC component (manY) from Escherichia coli O157:H7.